The following is a 111-amino-acid chain: Probable 4-amino-4-deoxy-L-arabinose-phosphoundecaprenol flippase subunit ArnE (111 aa).

The Cytoplasmic segment spans residues methionine 1–alanine 37. Residues leucine 38–leucine 58 form a helical membrane-spanning segment. Residues leucine 40–serine 109 enclose the EamA domain. Residues glutamine 59–threonine 60 lie on the Periplasmic side of the membrane. The chain crosses the membrane as a helical span at residues valine 61–alanine 81. At threonine 82 to glutamate 87 the chain is on the cytoplasmic side. A helical membrane pass occupies residues proline 88–glycine 108. The Periplasmic segment spans residues serine 109–valine 111.

It belongs to the ArnE family. In terms of assembly, heterodimer of ArnE and ArnF.

Its subcellular location is the cell inner membrane. It functions in the pathway bacterial outer membrane biogenesis; lipopolysaccharide biosynthesis. Translocates 4-amino-4-deoxy-L-arabinose-phosphoundecaprenol (alpha-L-Ara4N-phosphoundecaprenol) from the cytoplasmic to the periplasmic side of the inner membrane. The sequence is that of Probable 4-amino-4-deoxy-L-arabinose-phosphoundecaprenol flippase subunit ArnE from Escherichia fergusonii (strain ATCC 35469 / DSM 13698 / CCUG 18766 / IAM 14443 / JCM 21226 / LMG 7866 / NBRC 102419 / NCTC 12128 / CDC 0568-73).